The primary structure comprises 300 residues: Cation-efflux pump FieF (300 aa).

The next 4 membrane-spanning stretches (helical) occupy residues 12–32, 39–59, 82–102, and 114–134; these read AAIAATVMASLLLLIKIFAWW, ILAALVDSLVDIAASLTNLLV, AALAQSMFISGSALFLFLTGI, and PGVGIVVTLIALVCTIILVTF. Zn(2+)-binding residues include Asp45 and Asp49. Residues His153 and Asp157 each coordinate Zn(2+). The helical transmembrane segment at 164–184 threads the bilayer; the sequence is ILVALGLAWYGWHRADALFAL.

This sequence belongs to the cation diffusion facilitator (CDF) transporter (TC 2.A.4) family. FieF subfamily. As to quaternary structure, homodimer.

Its subcellular location is the cell inner membrane. The catalysed reaction is Zn(2+)(in) + H(+)(out) = Zn(2+)(out) + H(+)(in). The enzyme catalyses Cd(2+)(in) + H(+)(out) = Cd(2+)(out) + H(+)(in). It carries out the reaction Fe(2+)(in) + H(+)(out) = Fe(2+)(out) + H(+)(in). Its function is as follows. Divalent metal cation transporter which exports Zn(2+), Cd(2+) and possibly Fe(2+). May be involved in zinc and iron detoxification by efflux. This Citrobacter koseri (strain ATCC BAA-895 / CDC 4225-83 / SGSC4696) protein is Cation-efflux pump FieF.